The sequence spans 109 residues: Small ribosomal subunit protein bS20 (109 aa).

Positions 1–26 (MANIKSAKKRAIQSEKRRKHNASRRS) are disordered.

The protein belongs to the bacterial ribosomal protein bS20 family.

Binds directly to 16S ribosomal RNA. The polypeptide is Small ribosomal subunit protein bS20 (Hamiltonella defensa subsp. Acyrthosiphon pisum (strain 5AT)).